The following is a 194-amino-acid chain: Molybdenum cofactor guanylyltransferase (194 aa).

Residues L12–G14, K25, D71, and D101 each bind GTP. D101 provides a ligand contact to Mg(2+).

This sequence belongs to the MobA family. Monomer. Requires Mg(2+) as cofactor.

It is found in the cytoplasm. It catalyses the reaction Mo-molybdopterin + GTP + H(+) = Mo-molybdopterin guanine dinucleotide + diphosphate. Transfers a GMP moiety from GTP to Mo-molybdopterin (Mo-MPT) cofactor (Moco or molybdenum cofactor) to form Mo-molybdopterin guanine dinucleotide (Mo-MGD) cofactor. The polypeptide is Molybdenum cofactor guanylyltransferase (Salmonella typhimurium (strain LT2 / SGSC1412 / ATCC 700720)).